A 334-amino-acid chain; its full sequence is Mucin-15 (334 aa).

The N-terminal stretch at 1–23 (MLALAKILLISTLFYSLLSGSHG) is a signal peptide. The Extracellular segment spans residues 24 to 236 (KENQDINTTQ…SDPQKENRNT (213 aa)). Residues N30, N61, N79, N90, N148, N155, N163, N218, and N225 are each glycosylated (N-linked (GlcNAc...) asparagine). The segment at 64-104 (TSNLKASHSPPLNLPNNSHGITDFSSNSSAEHSLGSLKPTS) is disordered. The segment covering 77 to 94 (LPNNSHGITDFSSNSSAE) has biased composition (polar residues). The chain crosses the membrane as a helical span at residues 237 to 257 (GIVFGAILGAILGVSLLTLVG). The Cytoplasmic portion of the chain corresponds to 258-334 (YLLCGKRKTD…DDIPPLRTSV (77 aa)). Residues 304–334 (PTLNDSAMPESEENARDGIPMDDIPPLRTSV) form a disordered region.

Highly glycosylated (N- and O-linked carbohydrates). In terms of tissue distribution, expressed in spleen, thymus, prostate, testis, ovary, small intestine, colon, peripheral blood leukocyte, bone marrow, lymph node and lung.

Its subcellular location is the cell membrane. The protein resides in the secreted. Functionally, may play a role in the cell adhesion to the extracellular matrix. This is Mucin-15 (MUC15) from Homo sapiens (Human).